The primary structure comprises 476 residues: Ribulose bisphosphate carboxylase large chain (476 aa).

Positions 124 and 174 each coordinate substrate. Lysine 176 acts as the Proton acceptor in catalysis. Residue lysine 178 coordinates substrate. Residues lysine 202, aspartate 204, and glutamate 205 each contribute to the Mg(2+) site. At lysine 202 the chain carries N6-carboxylysine. Histidine 295 (proton acceptor) is an active-site residue. Substrate is bound by residues arginine 296, histidine 328, and serine 380.

This sequence belongs to the RuBisCO large chain family. Type I subfamily. In terms of assembly, heterohexadecamer of 8 large chains and 8 small chains; disulfide-linked. The disulfide link is formed within the large subunit homodimers. Forms complexes of many stoichiometries with Raf1 with and without RbcS. RuBisCO interacts with the C-terminus of CcmM. Requires Mg(2+) as cofactor. In terms of processing, the disulfide bond which can form in the large chain dimeric partners within the hexadecamer appears to be associated with oxidative stress and protein turnover.

The protein resides in the carboxysome. It catalyses the reaction 2 (2R)-3-phosphoglycerate + 2 H(+) = D-ribulose 1,5-bisphosphate + CO2 + H2O. It carries out the reaction D-ribulose 1,5-bisphosphate + O2 = 2-phosphoglycolate + (2R)-3-phosphoglycerate + 2 H(+). Functionally, ruBisCO catalyzes two reactions: the carboxylation of D-ribulose 1,5-bisphosphate, the primary event in carbon dioxide fixation, as well as the oxidative fragmentation of the pentose substrate in the photorespiration process. Both reactions occur simultaneously and in competition at the same active site. The chain is Ribulose bisphosphate carboxylase large chain from Nostoc sp. (strain PCC 7120 / SAG 25.82 / UTEX 2576).